A 336-amino-acid polypeptide reads, in one-letter code: Plant-specific TFIIB-related protein 2 (336 aa).

Residues 2–34 (EEETCLDCKRPTIMVVDHSSGDTICSECGLVLE) form a TFIIB-type zinc finger. Zn(2+) is bound by residues cysteine 6, cysteine 9, cysteine 26, and cysteine 29.

As to expression, specifically expressed in reproductive organs and seeds.

Its subcellular location is the nucleus. Its function is as follows. Plant-specific TFIIB-related protein involved in the regulation of endosperm proliferation during the syncytial phase of endosperm development. Does not contribute to RNA polymerase IV or V activities in reproductive tissues. The chain is Plant-specific TFIIB-related protein 2 from Arabidopsis thaliana (Mouse-ear cress).